A 337-amino-acid polypeptide reads, in one-letter code: 4-hydroxyproline 2-epimerase 2 (337 aa).

The active-site Proton acceptor is Cys-90. Substrate-binding positions include 91–92, His-223, and Asp-249; that span reads GH. Residue Cys-253 is the Proton donor of the active site. 254-255 provides a ligand contact to substrate; it reads GT.

It belongs to the proline racemase family.

The catalysed reaction is trans-4-hydroxy-L-proline = cis-4-hydroxy-D-proline. In terms of biological role, catalyzes the epimerization of trans-4-hydroxy-L-proline (t4LHyp) to cis-4-hydroxy-D-proline (c4DHyp). Is likely involved in a degradation pathway that converts t4LHyp to alpha-ketoglutarate. Can also catalyze the epimerization of trans-3-hydroxy-L-proline (t3LHyp) to cis-3-hydroxy-D-proline (c3DHyp), albeit with 170-fold lower efficiency. Displays no proline racemase activity. This is 4-hydroxyproline 2-epimerase 2 from Brucella anthropi (strain ATCC 49188 / DSM 6882 / CCUG 24695 / JCM 21032 / LMG 3331 / NBRC 15819 / NCTC 12168 / Alc 37) (Ochrobactrum anthropi).